The sequence spans 96 residues: Mitochondrial import inner membrane translocase subunit Tim13-A (96 aa).

Residues 47–70 (CFRKCIGKPGGSLDNSEQKCIAMC) carry the Twin CX3C motif motif. 2 disulfides stabilise this stretch: C47–C70 and C51–C66.

This sequence belongs to the small Tim family. As to quaternary structure, heterohexamer; composed of 3 copies of TIMM8 (TIMM8A or TIMM8B) and 3 copies of TIMM13, named soluble 70 kDa complex. Associates with the TIM22 complex, whose core is composed of TIMM22.

It is found in the mitochondrion inner membrane. Mitochondrial intermembrane chaperone that participates in the import and insertion of some multi-pass transmembrane proteins into the mitochondrial inner membrane. Also required for the transfer of beta-barrel precursors from the TOM complex to the sorting and assembly machinery (SAM complex) of the outer membrane. Acts as a chaperone-like protein that protects the hydrophobic precursors from aggregation and guide them through the mitochondrial intermembrane space. The TIMM8-TIMM13 complex mediates the import of some proteins while the predominant TIMM9-TIMM10 70 kDa complex mediates the import of much more proteins. In Xenopus laevis (African clawed frog), this protein is Mitochondrial import inner membrane translocase subunit Tim13-A (timm13-a).